Reading from the N-terminus, the 172-residue chain is Regulator of hemoglobinization and erythroid cell expansion protein (172 aa).

The chain crosses the membrane as a helical span at residues 9-29; sequence WHGLVIAVVSLFLQACFLTAI. The interval 52 to 106 is disordered; that stretch reads VPRPSPGHHHPPAVKEMKETQTERDIPMSDSLYRHDSDTPSDSLDSSCSSPPACQ. Over residues 64–89 the composition is skewed to basic and acidic residues; it reads AVKEMKETQTERDIPMSDSLYRHDSD. Low complexity predominate over residues 91-103; that stretch reads PSDSLDSSCSSPP. Phosphotyrosine occurs at positions 132 and 141.

In terms of assembly, interacts with EPOR; this interaction occurs in a erythropoietin (EPO)-dependent manner. Interacts with JAK2; this interaction occurs in a erythropoietin (EPO)-dependent manner. Interacts (via tyrosine-phosphorylated form) with GRB2. Phosphorylated. Phosphorylation on Tyr-132 and Tyr-141 occurs in a erythropoietin (EPO)-dependent manner. In terms of tissue distribution, expressed in the proerythroblasts (at protein level). Expressed strongly in the kidney. Expressed weakly in the pancreas, liver and lung. Expressed strongly in erythroid progenitor cells (EPCs). Expressed weakly in T-cells and neutrophils.

It localises to the cell membrane. Functionally, acts as a signaling transduction factor of the EPO-EPOR signaling pathway promoting erythroid cell differentiation. The chain is Regulator of hemoglobinization and erythroid cell expansion protein from Homo sapiens (Human).